The following is a 571-amino-acid chain: Proline--tRNA ligase (571 aa).

The protein belongs to the class-II aminoacyl-tRNA synthetase family. ProS type 1 subfamily. In terms of assembly, homodimer.

The protein resides in the cytoplasm. It catalyses the reaction tRNA(Pro) + L-proline + ATP = L-prolyl-tRNA(Pro) + AMP + diphosphate. Its function is as follows. Catalyzes the attachment of proline to tRNA(Pro) in a two-step reaction: proline is first activated by ATP to form Pro-AMP and then transferred to the acceptor end of tRNA(Pro). As ProRS can inadvertently accommodate and process non-cognate amino acids such as alanine and cysteine, to avoid such errors it has two additional distinct editing activities against alanine. One activity is designated as 'pretransfer' editing and involves the tRNA(Pro)-independent hydrolysis of activated Ala-AMP. The other activity is designated 'posttransfer' editing and involves deacylation of mischarged Ala-tRNA(Pro). The misacylated Cys-tRNA(Pro) is not edited by ProRS. This chain is Proline--tRNA ligase, found in Histophilus somni (strain 2336) (Haemophilus somnus).